The primary structure comprises 150 residues: Meiotic expression up-regulated protein 15 (150 aa).

This chain is Meiotic expression up-regulated protein 15 (meu15), found in Schizosaccharomyces pombe (strain 972 / ATCC 24843) (Fission yeast).